The sequence spans 147 residues: Insertion element IS402 uncharacterized 16.2 kDa protein (147 aa).

The tract at residues 106-147 (DSSSIRAVGAGQKLGQTPPIARDPVPSTTSSPTPTVRRSPRS) is disordered. Positions 129–147 (PVPSTTSSPTPTVRRSPRS) are enriched in low complexity.

The protein belongs to the transposase 6 family.

This Burkholderia cepacia (Pseudomonas cepacia) protein is Insertion element IS402 uncharacterized 16.2 kDa protein.